The following is a 343-amino-acid chain: Ion-translocating oxidoreductase complex subunit D (343 aa).

The next 4 helical transmembrane spans lie at 24 to 44 (VLLA…AGTL), 45 to 65 (YNLA…LAAR), 69 to 91 (LAFF…ALPP), and 124 to 144 (AMLG…SWPA). At Thr-171 the chain carries FMN phosphoryl threonine. 5 consecutive transmembrane segments (helical) span residues 197–217 (FGGA…LYLL), 221–241 (LITW…SLLF), 251–271 (GSPL…FIVT), 284–304 (LVFG…GGYP), and 305–325 (DAVA…DYYT).

It belongs to the NqrB/RnfD family. The complex is composed of six subunits: RnfA, RnfB, RnfC, RnfD, RnfE and RnfG. FMN is required as a cofactor.

The protein resides in the cell inner membrane. Its function is as follows. Part of a membrane-bound complex that couples electron transfer with translocation of ions across the membrane. This is Ion-translocating oxidoreductase complex subunit D from Ectopseudomonas mendocina (strain ymp) (Pseudomonas mendocina).